The sequence spans 450 residues: Phosphoglucosamine mutase (450 aa).

Catalysis depends on S101, which acts as the Phosphoserine intermediate. Mg(2+) contacts are provided by S101, D242, D244, and D246. Phosphoserine is present on S101.

This sequence belongs to the phosphohexose mutase family. Mg(2+) serves as cofactor. Post-translationally, activated by phosphorylation.

The enzyme catalyses alpha-D-glucosamine 1-phosphate = D-glucosamine 6-phosphate. Its function is as follows. Catalyzes the conversion of glucosamine-6-phosphate to glucosamine-1-phosphate. The polypeptide is Phosphoglucosamine mutase (Rhodopseudomonas palustris (strain BisB5)).